Here is a 459-residue protein sequence, read N- to C-terminus: Bifunctional protein GlmU (459 aa).

Positions 1–229 (MTNYAIILAA…FDESLGVNDR (229 aa)) are pyrophosphorylase. Residues 8 to 11 (LAAG), K22, Q72, and 77 to 78 (GT) contribute to the UDP-N-acetyl-alpha-D-glucosamine site. A Mg(2+)-binding site is contributed by D102. UDP-N-acetyl-alpha-D-glucosamine is bound by residues G139, E154, N169, and N227. Mg(2+) is bound at residue N227. The segment at 230-250 (VALATAESVMRRRINQQHMVN) is linker. Positions 251–459 (GVSFVNPHAT…KRLPHHPQNK (209 aa)) are N-acetyltransferase. R332 and K350 together coordinate UDP-N-acetyl-alpha-D-glucosamine. The Proton acceptor role is filled by H362. The UDP-N-acetyl-alpha-D-glucosamine site is built by Y365 and N376. Residues A379, 385–386 (NY), S404, A422, and R439 each bind acetyl-CoA.

It in the N-terminal section; belongs to the N-acetylglucosamine-1-phosphate uridyltransferase family. The protein in the C-terminal section; belongs to the transferase hexapeptide repeat family. Homotrimer. The cofactor is Mg(2+).

The protein localises to the cytoplasm. It carries out the reaction alpha-D-glucosamine 1-phosphate + acetyl-CoA = N-acetyl-alpha-D-glucosamine 1-phosphate + CoA + H(+). The enzyme catalyses N-acetyl-alpha-D-glucosamine 1-phosphate + UTP + H(+) = UDP-N-acetyl-alpha-D-glucosamine + diphosphate. It functions in the pathway nucleotide-sugar biosynthesis; UDP-N-acetyl-alpha-D-glucosamine biosynthesis; N-acetyl-alpha-D-glucosamine 1-phosphate from alpha-D-glucosamine 6-phosphate (route II): step 2/2. It participates in nucleotide-sugar biosynthesis; UDP-N-acetyl-alpha-D-glucosamine biosynthesis; UDP-N-acetyl-alpha-D-glucosamine from N-acetyl-alpha-D-glucosamine 1-phosphate: step 1/1. The protein operates within bacterial outer membrane biogenesis; LPS lipid A biosynthesis. Catalyzes the last two sequential reactions in the de novo biosynthetic pathway for UDP-N-acetylglucosamine (UDP-GlcNAc). The C-terminal domain catalyzes the transfer of acetyl group from acetyl coenzyme A to glucosamine-1-phosphate (GlcN-1-P) to produce N-acetylglucosamine-1-phosphate (GlcNAc-1-P), which is converted into UDP-GlcNAc by the transfer of uridine 5-monophosphate (from uridine 5-triphosphate), a reaction catalyzed by the N-terminal domain. This chain is Bifunctional protein GlmU, found in Streptococcus sanguinis (strain SK36).